Consider the following 167-residue polypeptide: Telethonin (167 aa).

Ser39 is modified (phosphoserine). The interval 144-167 (VPVSKPGALRRSLSRSMSQEAQRG) is disordered. Positions 157 to 167 (SRSMSQEAQRG) are enriched in polar residues.

In terms of assembly, interacts with MYOZ1, MYOZ2 and MYOZ3. Interacts with CSRP3. Interacts directly with the N-terminal Ig-like domains of 2 titin (TTN) molecules. Interacts with ANKRD2; the interaction is direct. As to expression, heart and skeletal muscle.

The protein localises to the cytoplasm. It localises to the myofibril. The protein resides in the sarcomere. Functionally, muscle assembly regulating factor. Mediates the antiparallel assembly of titin (TTN) molecules at the sarcomeric Z-disk. In Homo sapiens (Human), this protein is Telethonin (TCAP).